A 683-amino-acid chain; its full sequence is DNA ligase (683 aa).

NAD(+) is bound by residues 36–40 (DAEYD), 85–86 (SL), and Glu119. Residue Lys121 is the N6-AMP-lysine intermediate of the active site. 4 residues coordinate NAD(+): Arg142, Glu179, Lys295, and Lys319. Zn(2+)-binding residues include Cys413, Cys416, Cys431, and Cys437. Residues 596–683 (TETLPLSGQT…EHQAHLGGEA (88 aa)) enclose the BRCT domain.

The protein belongs to the NAD-dependent DNA ligase family. LigA subfamily. Requires Mg(2+) as cofactor. Mn(2+) is required as a cofactor.

It catalyses the reaction NAD(+) + (deoxyribonucleotide)n-3'-hydroxyl + 5'-phospho-(deoxyribonucleotide)m = (deoxyribonucleotide)n+m + AMP + beta-nicotinamide D-nucleotide.. DNA ligase that catalyzes the formation of phosphodiester linkages between 5'-phosphoryl and 3'-hydroxyl groups in double-stranded DNA using NAD as a coenzyme and as the energy source for the reaction. It is essential for DNA replication and repair of damaged DNA. The sequence is that of DNA ligase from Hahella chejuensis (strain KCTC 2396).